Consider the following 334-residue polypeptide: Phenylalanine--tRNA ligase alpha subunit (334 aa).

Mg(2+) is bound at residue glutamate 249.

This sequence belongs to the class-II aminoacyl-tRNA synthetase family. Phe-tRNA synthetase alpha subunit type 1 subfamily. In terms of assembly, tetramer of two alpha and two beta subunits. Mg(2+) serves as cofactor.

It localises to the cytoplasm. The enzyme catalyses tRNA(Phe) + L-phenylalanine + ATP = L-phenylalanyl-tRNA(Phe) + AMP + diphosphate + H(+). The sequence is that of Phenylalanine--tRNA ligase alpha subunit from Desulfosudis oleivorans (strain DSM 6200 / JCM 39069 / Hxd3) (Desulfococcus oleovorans).